The primary structure comprises 451 residues: Pre-mRNA-splicing factor PRP46 (451 aa).

WD repeat units follow at residues 137–168 (GHLG…KVWD), 180–210 (GHVM…KCWD), 222–252 (GHLS…KLWD), 264–294 (GHKG…RLWD), 306–335 (HHKR…RSWG), 348–377 (EKTG…SFYD), and 397–427 (EGER…KIWK).

Belongs to the WD repeat PRL1/PRL2 family. As to quaternary structure, belongs to the CWC complex (or CEF1-associated complex), a spliceosome subcomplex composed of the U2, U5 and U6 snRNAs and at least BUD13, BUD31, BRR2, CDC40, CEF1, CLF1, CUS1, CWC2, CWC15, CWC21, CWC22, CWC23, CWC24, CWC25, CWC27, ECM2, HSH155, IST3, ISY1, LEA1, MSL1, NTC20, PRP8, PRP9, PRP11, PRP19, PRP21, PRP22, PRP45, PRP46, SLU7, SMB1, SMD1, SMD2, SMD3, SMX2, SMX3, SNT309, SNU114, SPP2, SYF1, SYF2, RSE1 and YJU2. Interacts with CEF1, CLF1, NTC20, PRP45 and SYF1.

It localises to the cytoplasm. It is found in the nucleus. Functionally, involved in pre-mRNA splicing. May also be required for cell cycle progression at G2/M. In Saccharomyces cerevisiae (strain ATCC 204508 / S288c) (Baker's yeast), this protein is Pre-mRNA-splicing factor PRP46 (PRP46).